The chain runs to 163 residues: Nucleotide-binding protein ROP_16630 (163 aa).

The protein belongs to the YajQ family.

Its function is as follows. Nucleotide-binding protein. This is Nucleotide-binding protein ROP_16630 from Rhodococcus opacus (strain B4).